The sequence spans 386 residues: Putative gustatory receptor 92a (386 aa).

Over 1-14 the chain is Cytoplasmic; that stretch reads MFEFLHQMSAPKLS. The helical transmembrane segment at 15–35 threads the bilayer; it reads TSILRYIFRYAQFIGVIFFCL. Topologically, residues 36-79 are extracellular; that stretch reads HTRKDDKTVFIRNWLKWLNVTHRIITFTRFFWVYIASISIKTNR. Asn-54 carries an N-linked (GlcNAc...) asparagine glycan. The helical transmembrane segment at 80–100 threads the bilayer; that stretch reads VLQVLHGMRLVLSIPNVAVIL. Over 101-141 the chain is Cytoplasmic; sequence CYHIFRGPEIIDLINQFLRLFRQVSDLFKTKTPGFGGRREL. A helical transmembrane segment spans residues 142–162; sequence ILILLNLISFAHEQTYLWFTI. The Extracellular segment spans residues 163 to 169; that stretch reads RKGFSWR. Residues 170 to 190 form a helical membrane-spanning segment; the sequence is FLIDWWCDFYLVSATNIFIHI. Topologically, residues 191–256 are cytoplasmic; sequence NSIGYLSLGV…YHTSIMFHKL (66 aa). Residues 257–277 traverse the membrane as a helical segment; the sequence is FVPLLFLALIYKVLLIALIGF. The Extracellular segment spans residues 278–287; that stretch reads NVAVEFYLNS. Residues 288-308 traverse the membrane as a helical segment; that stretch reads FIFWILLGKHVLDLFLVTVSV. Residues 309-356 lie on the Cytoplasmic side of the membrane; that stretch reads EGAVNQFLNIGMQFGNVGDLSKFQTTLDTLFLHLRLGHFRVSILGLFD. Residues 357 to 377 traverse the membrane as a helical segment; the sequence is VTQMQYLQFLSALLSGLAFIA. Residues 378–386 are Extracellular-facing; it reads QYRMQVGNG.

This sequence belongs to the insect chemoreceptor superfamily. Gustatory receptor (GR) family. Gr93a subfamily.

Its subcellular location is the cell membrane. Probable gustatory receptor which mediates acceptance or avoidance behavior, depending on its substrates. In Drosophila melanogaster (Fruit fly), this protein is Putative gustatory receptor 92a (Gr92a).